A 375-amino-acid polypeptide reads, in one-letter code: MIIILIFLIIPNIVLSIDYWVSFNKTIILDSNITNDNNDINGVSWNFLNNSLNTLATCGKAGNFCECSNYSTSLYNIAHNCSLTIFPHNDVFGTPYQVVWNQIINYTIKLLTPVTPPNITYNCTNFLITCKKNNGTNTIIYFNINDTNVKYTNESILEYNWNNSNFNNFTATCIINNTINSSNDTQTIDCINTLLSSYLDFFQVASYMFYMIIFIATGIIASIFISIITFLSLRKRKKHVEEIESPSPSESNEEEQCQHDDTTSIHEPSPREPLLPKPYSRYQYNTPIYYMRPLTQPLNPSPLPKLCPPPKPCPPPKPCPPPKPCPPPKPCPSSESCSPPESYSLPKPLPNIPLLPNIPPLSTQNISLIHVDRII.

An N-terminal signal peptide occupies residues 1 to 16; it reads MIIILIFLIIPNIVLS. Topologically, residues 17–207 are extracellular; sequence IDYWVSFNKT…YLDFFQVASY (191 aa). N-linked (GlcNAc...) asparagine; by host glycans are attached at residues Asn-24, Asn-80, Asn-105, Asn-122, Asn-134, Asn-145, Asn-168, Asn-176, and Asn-183. 2 cysteine pairs are disulfide-bonded: Cys-123–Cys-190 and Cys-130–Cys-173. Residues 208–228 form a helical membrane-spanning segment; that stretch reads MFYMIIFIATGIIASIFISII. The Cytoplasmic segment spans residues 229-375; the sequence is TFLSLRKRKK…ISLIHVDRII (147 aa). The segment at 242 to 278 is disordered; it reads EIESPSPSESNEEEQCQHDDTTSIHEPSPREPLLPKP. The span at 256–270 shows a compositional bias: basic and acidic residues; that stretch reads QCQHDDTTSIHEPSP. 5 tandem repeats follow at residues 305–310, 311–316, 317–322, 323–328, and 329–334. A 5 X 6 AA tandem repeats of K-[LP]-C-[PRS]-[PS]-[PS] region spans residues 305-334; it reads KLCPPPKPCPPPKPCPPPKPCPPPKPCPSS. A disordered region spans residues 323–350; the sequence is KPCPPPKPCPSSESCSPPESYSLPKPLP. Positions 332-346 are enriched in low complexity; sequence PSSESCSPPESYSLP.

This sequence belongs to the asfivirus CD2 homolog protein family. Both glycosylated and nonglycosylated forms interact (via C-terminus) with the host AP-1 complex. Cleaved into two fragments of 63 kDa and 26 kDa containing respectively the glycosylated N-terminus and the nonglycosylated C-terminus. A full-length 89-kDa glycosylated form also exists.

The protein resides in the host membrane. Its subcellular location is the virion membrane. It is found in the host Golgi apparatus. In terms of biological role, may play an immunosuppressive role by inhibiting lymphocyte proliferation and subsequently facilitating viral replication and generalization of infection. Responsible for viral hemadsorption, which may help viral spread. Increases virus replication in the tick vector at the step of virus uptake or replication in the tick gut. May play a role in the host Golgi reorganization to yield viral factories. May play a role in host cell penetration. The sequence is that of CD2 homolog from Ornithodoros (relapsing fever ticks).